A 350-amino-acid polypeptide reads, in one-letter code: Biotin synthase (350 aa).

A Radical SAM core domain is found at 63–281; the sequence is GDIELATLLS…IAVARITMPK (219 aa). [4Fe-4S] cluster contacts are provided by Cys-78, Cys-82, and Cys-85. Cys-122, Cys-153, Cys-213, and Arg-285 together coordinate [2Fe-2S] cluster.

Belongs to the radical SAM superfamily. Biotin synthase family. In terms of assembly, homodimer. [4Fe-4S] cluster is required as a cofactor. Requires [2Fe-2S] cluster as cofactor.

It catalyses the reaction (4R,5S)-dethiobiotin + (sulfur carrier)-SH + 2 reduced [2Fe-2S]-[ferredoxin] + 2 S-adenosyl-L-methionine = (sulfur carrier)-H + biotin + 2 5'-deoxyadenosine + 2 L-methionine + 2 oxidized [2Fe-2S]-[ferredoxin]. Its pathway is cofactor biosynthesis; biotin biosynthesis; biotin from 7,8-diaminononanoate: step 2/2. Catalyzes the conversion of dethiobiotin (DTB) to biotin by the insertion of a sulfur atom into dethiobiotin via a radical-based mechanism. This is Biotin synthase from Acidovorax sp. (strain JS42).